A 317-amino-acid chain; its full sequence is Probable arabinan endo-1,5-alpha-L-arabinosidase C (317 aa).

The N-terminal stretch at 1-17 is a signal peptide; the sequence is MLSFLAALSLPLALVNA. Residue Asp32 is the Proton acceptor of the active site. N-linked (GlcNAc...) asparagine glycosylation is present at Asn190. Residue Glu198 is the Proton donor of the active site.

Belongs to the glycosyl hydrolase 43 family.

It is found in the secreted. The enzyme catalyses Endohydrolysis of (1-&gt;5)-alpha-arabinofuranosidic linkages in (1-&gt;5)-arabinans.. It participates in glycan metabolism; L-arabinan degradation. Its function is as follows. Endo-1,5-alpha-L-arabinanase involved in degradation of pectin. Its preferred substrate is linear 1,5-alpha-L-arabinan. In Aspergillus flavus (strain ATCC 200026 / FGSC A1120 / IAM 13836 / NRRL 3357 / JCM 12722 / SRRC 167), this protein is Probable arabinan endo-1,5-alpha-L-arabinosidase C (abnC).